A 181-amino-acid chain; its full sequence is ATP-dependent protease subunit HslV (181 aa).

Thr7 is an active-site residue. Residues Ala162, Cys165, and Thr168 each contribute to the Na(+) site.

Belongs to the peptidase T1B family. HslV subfamily. As to quaternary structure, a double ring-shaped homohexamer of HslV is capped on each side by a ring-shaped HslU homohexamer. The assembly of the HslU/HslV complex is dependent on binding of ATP.

The protein localises to the cytoplasm. The catalysed reaction is ATP-dependent cleavage of peptide bonds with broad specificity.. With respect to regulation, allosterically activated by HslU binding. In terms of biological role, protease subunit of a proteasome-like degradation complex believed to be a general protein degrading machinery. The chain is ATP-dependent protease subunit HslV from Coxiella burnetii (strain Dugway 5J108-111).